A 134-amino-acid chain; its full sequence is MRSPYSLPYLLFLPLGACFPVLDTEEPVDAVGGTGREMSWMDPARGRPFPWGSPGWPRAPYPHALLVTAKELRASGKARAGFQLRLGRQDDGSEATGLLLGEAEKVGGLLGTLAEELNGYSRKKGGFSFRFGRR.

An N-terminal signal peptide occupies residues 1–18 (MRSPYSLPYLLFLPLGAC). The propeptide occupies 19–88 (FPVLDTEEPV…RAGFQLRLGR (70 aa)). Phe131 bears the Phenylalanine amide mark.

Belongs to the RFamide neuropeptide family. As to quaternary structure, ligand for the G-protein coupled receptor QRFPR/GPR103. As to expression, expressed in the hypothalamus.

The protein localises to the secreted. In terms of biological role, stimulates feeding behavior, metabolic rate and locomotor activity and increases blood pressure. May have orexigenic activity. May promote aldosterone secretion by the adrenal gland. The protein is Orexigenic neuropeptide QRFP of Bos taurus (Bovine).